The sequence spans 729 residues: Glycerophosphodiester phosphodiesterase GDPDL5 (729 aa).

An N-terminal signal peptide occupies residues 1-22 (MACPRVIFLILITFFILQTAFS). 2 consecutive GP-PDE domains span residues 33–320 (PAVI…YRAI) and 337–645 (ITII…ARYR). N88, N162, N218, N227, N285, N302, N390, N401, and N507 each carry an N-linked (GlcNAc...) asparagine glycan. The chain crosses the membrane as a helical span at residues 709 to 729 (AIEVPFAFIAMAILVCFFISV).

The protein belongs to the glycerophosphoryl diester phosphodiesterase family. In terms of tissue distribution, expressed in stems, flowers and siliques.

It localises to the membrane. The enzyme catalyses a sn-glycero-3-phosphodiester + H2O = an alcohol + sn-glycerol 3-phosphate + H(+). In Arabidopsis thaliana (Mouse-ear cress), this protein is Glycerophosphodiester phosphodiesterase GDPDL5.